Here is a 251-residue protein sequence, read N- to C-terminus: Exotoxin type A (251 aa).

Residues 1-30 (MENNKKVLKKMVFFVLVTFLGLTISQEVFA) form the signal peptide. A disulfide bridge links cysteine 117 with cysteine 128.

It belongs to the staphylococcal/streptococcal toxin family.

In terms of biological role, causative agent of the symptoms associated with scarlet fever, have been associated with streptococcal toxic shock-like disease and may play a role in the early events of rheumatic fever. This is Exotoxin type A (speA) from Streptococcus pyogenes serotype M18 (strain MGAS8232).